We begin with the raw amino-acid sequence, 230 residues long: UPF0173 metal-dependent hydrolase TM1040_1920 (230 aa).

The protein belongs to the UPF0173 family.

This Ruegeria sp. (strain TM1040) (Silicibacter sp.) protein is UPF0173 metal-dependent hydrolase TM1040_1920.